Reading from the N-terminus, the 193-residue chain is Dual-action ribosomal maturation protein DarP (193 aa).

It belongs to the DarP family.

Its subcellular location is the cytoplasm. Member of a network of 50S ribosomal subunit biogenesis factors which assembles along the 30S-50S interface, preventing incorrect 23S rRNA structures from forming. Promotes peptidyl transferase center (PTC) maturation. The sequence is that of Dual-action ribosomal maturation protein DarP from Vibrio cholerae serotype O1 (strain ATCC 39315 / El Tor Inaba N16961).